A 143-amino-acid chain; its full sequence is Dehydrin DHN2 (143 aa).

The span at 1-10 shows a compositional bias: polar residues; it reads MEYQGQTGHA. Positions 1–143 are disordered; that stretch reads MEYQGQTGHA…IKEKLPGGQH (143 aa). Over residues 24 to 34 the composition is skewed to gly residues; it reads GHGGATGGPTG. A compositionally biased stretch (low complexity) spans 35-46; it reads THGAAAAAAGTG. Over residues 51 to 61 the composition is skewed to basic and acidic residues; it reads TRDDHKTDGVL. Over residues 62–71 the composition is skewed to low complexity; that stretch reads RRSGSSSSSS. The segment covering 86–101 has biased composition (basic and acidic residues); it reads KEKIKEKLPGGAHKDA. Residues 109-123 show a composition bias toward low complexity; sequence AAGEYAGTGTHGAEA. Over residues 124-143 the composition is skewed to basic and acidic residues; sequence TGEKKGVMDKIKEKLPGGQH.

This sequence belongs to the plant dehydrin family.

The sequence is that of Dehydrin DHN2 (DHN2) from Hordeum vulgare (Barley).